A 308-amino-acid polypeptide reads, in one-letter code: Aspartate carbamoyltransferase catalytic subunit (308 aa).

Residues arginine 57 and threonine 58 each contribute to the carbamoyl phosphate site. Lysine 86 contributes to the L-aspartate binding site. The carbamoyl phosphate site is built by arginine 107, histidine 135, and glutamine 138. The L-aspartate site is built by arginine 167 and arginine 228. 2 residues coordinate carbamoyl phosphate: leucine 267 and proline 268.

Belongs to the aspartate/ornithine carbamoyltransferase superfamily. ATCase family. In terms of assembly, heterooligomer of catalytic and regulatory chains.

It carries out the reaction carbamoyl phosphate + L-aspartate = N-carbamoyl-L-aspartate + phosphate + H(+). The protein operates within pyrimidine metabolism; UMP biosynthesis via de novo pathway; (S)-dihydroorotate from bicarbonate: step 2/3. Its function is as follows. Catalyzes the condensation of carbamoyl phosphate and aspartate to form carbamoyl aspartate and inorganic phosphate, the committed step in the de novo pyrimidine nucleotide biosynthesis pathway. The polypeptide is Aspartate carbamoyltransferase catalytic subunit (Methanosarcina barkeri (strain Fusaro / DSM 804)).